Reading from the N-terminus, the 331-residue chain is Pantothenate kinase (331 aa).

109-116 (GSVAVGKS) contributes to the ATP binding site.

This sequence belongs to the prokaryotic pantothenate kinase family.

The protein resides in the cytoplasm. It catalyses the reaction (R)-pantothenate + ATP = (R)-4'-phosphopantothenate + ADP + H(+). The protein operates within cofactor biosynthesis; coenzyme A biosynthesis; CoA from (R)-pantothenate: step 1/5. This Sinorhizobium medicae (strain WSM419) (Ensifer medicae) protein is Pantothenate kinase.